We begin with the raw amino-acid sequence, 281 residues long: sn-glycerol-3-phosphate transport system permease protein UgpE (281 aa).

Transmembrane regions (helical) follow at residues 16–36 (LILG…AATL), 85–105 (FSIT…IVWF), 113–133 (FFWM…FPTV), 142–162 (LDSY…TFLF), 202–222 (ALFV…LLII), and 247–267 (WNSV…IVLV). An ABC transmembrane type-1 domain is found at 77–268 (LLNSFVMAFS…IPPVVIVLVM (192 aa)).

This sequence belongs to the binding-protein-dependent transport system permease family. UgpAE subfamily. The complex is composed of two ATP-binding proteins (UgpC), two transmembrane proteins (UgpA and UgpE) and a solute-binding protein (UgpB).

Its subcellular location is the cell inner membrane. Part of the ABC transporter complex UgpBAEC involved in sn-glycerol-3-phosphate (G3P) import. Probably responsible for the translocation of the substrate across the membrane. This is sn-glycerol-3-phosphate transport system permease protein UgpE (ugpE) from Escherichia coli O157:H7.